The sequence spans 150 residues: UPF0756 membrane protein A1S_2121 (150 aa).

4 consecutive transmembrane segments (helical) span residues 22 to 42 (SQNAAVTIAAGILIVIKITPL), 45 to 65 (FFPYIQAHGLNLGILILTIGV), 83 to 103 (FISFKSLVAIAIGLLVAWLGG), and 115 to 135 (VVAGLLIGTVAGVALLRGVPV).

It belongs to the UPF0756 family.

It is found in the cell membrane. The chain is UPF0756 membrane protein A1S_2121 from Acinetobacter baumannii (strain ATCC 17978 / DSM 105126 / CIP 53.77 / LMG 1025 / NCDC KC755 / 5377).